Consider the following 155-residue polypeptide: Ribosomal RNA large subunit methyltransferase H (155 aa).

S-adenosyl-L-methionine is bound by residues L72, G104, and 123-128; that span reads LSRMTF.

The protein belongs to the RNA methyltransferase RlmH family. In terms of assembly, homodimer.

It is found in the cytoplasm. The catalysed reaction is pseudouridine(1915) in 23S rRNA + S-adenosyl-L-methionine = N(3)-methylpseudouridine(1915) in 23S rRNA + S-adenosyl-L-homocysteine + H(+). Its function is as follows. Specifically methylates the pseudouridine at position 1915 (m3Psi1915) in 23S rRNA. In Kosmotoga olearia (strain ATCC BAA-1733 / DSM 21960 / TBF 19.5.1), this protein is Ribosomal RNA large subunit methyltransferase H.